A 955-amino-acid chain; its full sequence is Isoleucine--tRNA ligase (955 aa).

The 'HIGH' region motif lies at 58–68 (IYANGDIHIGH). Glu552 contributes to the L-isoleucyl-5'-AMP binding site. The 'KMSKS' region motif lies at 593-597 (KMSKS). ATP is bound at residue Lys596. Positions 918, 921, 938, and 941 each coordinate Zn(2+).

This sequence belongs to the class-I aminoacyl-tRNA synthetase family. IleS type 1 subfamily. In terms of assembly, monomer. It depends on Zn(2+) as a cofactor.

It localises to the cytoplasm. The enzyme catalyses tRNA(Ile) + L-isoleucine + ATP = L-isoleucyl-tRNA(Ile) + AMP + diphosphate. Functionally, catalyzes the attachment of isoleucine to tRNA(Ile). As IleRS can inadvertently accommodate and process structurally similar amino acids such as valine, to avoid such errors it has two additional distinct tRNA(Ile)-dependent editing activities. One activity is designated as 'pretransfer' editing and involves the hydrolysis of activated Val-AMP. The other activity is designated 'posttransfer' editing and involves deacylation of mischarged Val-tRNA(Ile). The sequence is that of Isoleucine--tRNA ligase from Vesicomyosocius okutanii subsp. Calyptogena okutanii (strain HA).